The primary structure comprises 97 residues: uncharacterized protein (97 aa).

This is an uncharacterized protein from Escherichia coli (Bacteriophage T4).